The sequence spans 1790 residues: Intracellular protein transport protein USO1 (1790 aa).

Residues 1 to 724 (MDIIQGLIQQ…LSHDPDEEPI (724 aa)) are globular head. ARM repeat units follow at residues 45-89 (AFSR…LFIR), 127-170 (QFSL…AVMA), 173-213 (PLKA…MAVV), 215-260 (DSPH…NILK), 261-312 (YNTS…VSLT), 314-362 (EPGN…NMVR), 363-429 (SNEH…LKAY), 431-512 (MDNF…PFKL), 543-584 (GNDL…LIYW), and 586-630 (FGDF…LGVA). The segment at 452-484 (TNNVGDNAKENGGSNKSDKESDSDKDTDGKDGT) is disordered. The tract at residues 465–487 (SNKSDKESDSDKDTDGKDGTEYE) is charged (hyper-hydrophilic). Basic and acidic residues predominate over residues 467 to 484 (KSDKESDSDKDTDGKDGT). The stretch at 725-1790 (NKISFEEVEK…EEDEEEGQVA (1066 aa)) forms a coiled coil. A dispensable for the protein function region spans residues 991 to 1790 (ESSIQLSNLQ…EEDEEEGQVA (800 aa)). Disordered regions lie at residues 1185–1221 (EITS…SNLK), 1326–1351 (KEKS…EEQL), 1485–1547 (GLKK…EDIK), 1645–1667 (QELD…EVRK), 1722–1742 (DNLK…SEID), and 1762–1790 (LKDL…GQVA). A compositionally biased stretch (basic and acidic residues) spans 1194-1209 (ESIKKKNDELEGEVKA). Composition is skewed to basic and acidic residues over residues 1485 to 1512 (GLKK…KLES), 1519 to 1547 (TELK…EDIK), 1655 to 1667 (QKSE…EVRK), and 1722 to 1738 (DNLK…NEDR). Position 1770 is a phosphoserine (Ser-1770). Acidic residues predominate over residues 1770 to 1790 (SSDEEDDEEDDEEDEEEGQVA).

This sequence belongs to the VDP/USO1/EDE1 family. As to quaternary structure, homodimer. Dimerizes by parallel association of the tails, resulting in an elongated structure with two globular head domains side by side, and a long rod-like tail structure.

The protein resides in the cytoplasm. The protein localises to the cytoskeleton. Its subcellular location is the cytoplasmic vesicle membrane. It is found in the endoplasmic reticulum membrane. It localises to the golgi apparatus membrane. In terms of biological role, required for protein transport from the ER to the Golgi complex. The sequence is that of Intracellular protein transport protein USO1 (USO1) from Saccharomyces cerevisiae (strain ATCC 204508 / S288c) (Baker's yeast).